A 277-amino-acid polypeptide reads, in one-letter code: Diaminopimelate epimerase (277 aa).

Positions 13, 46, and 65 each coordinate substrate. Cysteine 74 (proton donor) is an active-site residue. Substrate is bound by residues 75 to 76 (GN), asparagine 158, asparagine 191, and 209 to 210 (ER). Catalysis depends on cysteine 218, which acts as the Proton acceptor. 219–220 (GT) lines the substrate pocket.

It belongs to the diaminopimelate epimerase family. In terms of assembly, homodimer.

The protein localises to the cytoplasm. The catalysed reaction is (2S,6S)-2,6-diaminopimelate = meso-2,6-diaminopimelate. It functions in the pathway amino-acid biosynthesis; L-lysine biosynthesis via DAP pathway; DL-2,6-diaminopimelate from LL-2,6-diaminopimelate: step 1/1. Functionally, catalyzes the stereoinversion of LL-2,6-diaminopimelate (L,L-DAP) to meso-diaminopimelate (meso-DAP), a precursor of L-lysine and an essential component of the bacterial peptidoglycan. The polypeptide is Diaminopimelate epimerase (Nitrosospira multiformis (strain ATCC 25196 / NCIMB 11849 / C 71)).